The chain runs to 279 residues: Replication protein A 32 kDa subunit A (279 aa).

A disordered region spans residues 1-39; the sequence is MMSFSQPDAFSPSQFTSSQNAAADSTTPSKSRGASSTMP. Positions 71-145 form a DNA-binding region, OB; the sequence is VRLVGLVSGK…RATAFAIRPV (75 aa). Residues 181-210 form a disordered region; sequence GSSSSNGFSEMTTPTSVKSNPAPVLSVTNG. Polar residues predominate over residues 190–199; that stretch reads EMTTPTSVKS.

The protein belongs to the replication factor A protein 2 family. As to quaternary structure, heterotrimer of RPA1, RPA2 and RPA3 (canonical replication protein A complex). Interacts with RPA1A, RPA1B and RPA3. Phosphorylated in a cell-cycle-dependent manner (from the S phase until mitosis). In response to DNA damage, recruited to DNA-repair nuclear foci, as a hypophosphorylated form. Expressed in root tips, roots, shoot apical meristem (SAM), young leaves, flag leaves and ears, and at lower levels in mature leaves.

The protein resides in the nucleus. Component of the replication protein A complex (RPA) required for DNA recombination, repair and replication. The activity of RPA is mediated by single-stranded DNA binding and protein interactions. In Oryza sativa subsp. japonica (Rice), this protein is Replication protein A 32 kDa subunit A (RPA2A).